Reading from the N-terminus, the 172-residue chain is Acetolactate synthase small subunit (172 aa).

Residues 4-78 (TLSVLVEDEA…NVIKVQDITE (75 aa)) enclose the ACT domain.

This sequence belongs to the acetolactate synthase small subunit family. In terms of assembly, dimer of large and small chains.

The catalysed reaction is 2 pyruvate + H(+) = (2S)-2-acetolactate + CO2. Its pathway is amino-acid biosynthesis; L-isoleucine biosynthesis; L-isoleucine from 2-oxobutanoate: step 1/4. It functions in the pathway amino-acid biosynthesis; L-valine biosynthesis; L-valine from pyruvate: step 1/4. The polypeptide is Acetolactate synthase small subunit (ilvH) (Synechocystis sp. (strain ATCC 27184 / PCC 6803 / Kazusa)).